We begin with the raw amino-acid sequence, 518 residues long: MSPIALLSVSDKTGLIPLAKALVNDLGFKIISSGGTAKLIESENLPVTRVADYTGFPEILGGRVKTLNPKIHGGILARRDKQSHLDDLDKQNINPIDLVVVNLYPFVKTISKENVSWEEAIENIDIGGPTMIRAAAKNHQDVLVVTDPSQYSNLIDAYKSKKITTELRKKYSQQAFEHTATYDLTISNWIANQSSSKKVSWLQSLPLKQELRYGENPHQKASWYGEPEKGWSGANQLQGKELSTNNLLDLEAALSTLREFGYKNNISNPSYQKAAVVIKHTNPCGVAIGDSPSSALKRALDGDRVSAFGGIIAINCPVDEAAAKEIENIFIECVVAPYFDETAKEILSKKKNLRLLELKAESVQKADKNHIRSILGGLLIQDLDEPSIDQKKWKSVTELIPTDEEMNDLSFAWKIVKHIRSNAIAVASNQQSLGIGAGQMNRVGSAKLALEAAGTKSKGAVLASDGFFPFDDTVKMASDYGISSIIQPGGSIRDEDSIKACNELGIKMILTGKRHFLH.

The 146-residue stretch at 1 to 146 (MSPIALLSVS…KNHQDVLVVT (146 aa)) folds into the MGS-like domain.

It belongs to the PurH family.

The enzyme catalyses (6R)-10-formyltetrahydrofolate + 5-amino-1-(5-phospho-beta-D-ribosyl)imidazole-4-carboxamide = 5-formamido-1-(5-phospho-D-ribosyl)imidazole-4-carboxamide + (6S)-5,6,7,8-tetrahydrofolate. It carries out the reaction IMP + H2O = 5-formamido-1-(5-phospho-D-ribosyl)imidazole-4-carboxamide. It participates in purine metabolism; IMP biosynthesis via de novo pathway; 5-formamido-1-(5-phospho-D-ribosyl)imidazole-4-carboxamide from 5-amino-1-(5-phospho-D-ribosyl)imidazole-4-carboxamide (10-formyl THF route): step 1/1. Its pathway is purine metabolism; IMP biosynthesis via de novo pathway; IMP from 5-formamido-1-(5-phospho-D-ribosyl)imidazole-4-carboxamide: step 1/1. This Prochlorococcus marinus (strain NATL2A) protein is Bifunctional purine biosynthesis protein PurH.